Consider the following 607-residue polypeptide: Transporter aclS (607 aa).

The next 12 helical transmembrane spans lie at Leu-67–Leu-87, Ile-91–Pro-111, Leu-152–Leu-172, Val-192–Tyr-212, Leu-221–Leu-241, Ser-262–Leu-282, Val-317–Leu-337, Ala-364–Asp-384, Gly-423–Ala-443, Thr-445–Ile-465, Gly-500–Asn-520, and His-531–Val-551. Residues Asn-583–Val-607 are disordered. The segment covering Asp-592–Val-607 has biased composition (basic and acidic residues).

Belongs to the purine-cytosine permease (2.A.39) family.

It is found in the membrane. Functionally, transporter; part of the gene cluster that mediates the biosynthesis of aspirochlorine (or antibiotic A30641), an unusual halogenated spiro compound with distinctive antifungal properties due to selective inhibition of protein biosynthesis, and which is also active against bacteria, viruses, and murine tumor cells. The chain is Transporter aclS from Aspergillus oryzae (strain ATCC 42149 / RIB 40) (Yellow koji mold).